The sequence spans 379 residues: Chaperone protein DnaJ (379 aa).

Residues 5–70 (DFYEVLGVSR…QKRSAYDQYG (66 aa)) form the J domain. The segment at 134 to 212 (GCDKEIEVPT…CHGEGRVHKT (79 aa)) adopts a CR-type zinc-finger fold. The Zn(2+) site is built by Cys-147, Cys-150, Cys-164, Cys-167, Cys-186, Cys-189, Cys-200, and Cys-203. 4 CXXCXGXG motif repeats span residues 147–154 (CDPCEGTG), 164–171 (CSTCHGQG), 186–193 (CPTCHGKG), and 200–207 (CNSCHGEG).

This sequence belongs to the DnaJ family. As to quaternary structure, homodimer. It depends on Zn(2+) as a cofactor.

Its subcellular location is the cytoplasm. Participates actively in the response to hyperosmotic and heat shock by preventing the aggregation of stress-denatured proteins and by disaggregating proteins, also in an autonomous, DnaK-independent fashion. Unfolded proteins bind initially to DnaJ; upon interaction with the DnaJ-bound protein, DnaK hydrolyzes its bound ATP, resulting in the formation of a stable complex. GrpE releases ADP from DnaK; ATP binding to DnaK triggers the release of the substrate protein, thus completing the reaction cycle. Several rounds of ATP-dependent interactions between DnaJ, DnaK and GrpE are required for fully efficient folding. Also involved, together with DnaK and GrpE, in the DNA replication of plasmids through activation of initiation proteins. The polypeptide is Chaperone protein DnaJ (Aliivibrio fischeri (strain ATCC 700601 / ES114) (Vibrio fischeri)).